A 262-amino-acid polypeptide reads, in one-letter code: Hydroxyethylthiazole kinase (262 aa).

Methionine 40 lines the substrate pocket. ATP contacts are provided by lysine 116 and threonine 162. Glycine 189 is a substrate binding site.

This sequence belongs to the Thz kinase family. Mg(2+) serves as cofactor.

The catalysed reaction is 5-(2-hydroxyethyl)-4-methylthiazole + ATP = 4-methyl-5-(2-phosphooxyethyl)-thiazole + ADP + H(+). It participates in cofactor biosynthesis; thiamine diphosphate biosynthesis; 4-methyl-5-(2-phosphoethyl)-thiazole from 5-(2-hydroxyethyl)-4-methylthiazole: step 1/1. Its function is as follows. Catalyzes the phosphorylation of the hydroxyl group of 4-methyl-5-beta-hydroxyethylthiazole (THZ). The protein is Hydroxyethylthiazole kinase of Clostridioides difficile (strain 630) (Peptoclostridium difficile).